A 361-amino-acid polypeptide reads, in one-letter code: Protein TIFY 8 (361 aa).

Disordered stretches follow at residues 53–78 (NKAA…GLSS), 113–134 (RFSG…HPET), 190–232 (QTAA…RKDL), and 268–361 (SGGS…KEAT). Positions 56–78 (AKAAMTPSTASASSAGGLGGLSS) are enriched in low complexity. 2 stretches are compositionally biased toward polar residues: residues 113–127 (RFSG…SHFT) and 208–232 (SSFT…RKDL). The Tify domain maps to 232–267 (LASSTKQMTIFYGGQAHVFDDVHPNKADVIMALAGS). The span at 333–361 (GREHQGSIISRGRDIRDPVHRSDPEKEAT) shows a compositional bias: basic and acidic residues.

The protein belongs to the TIFY/JAZ family. In terms of assembly, interacts with AFPH2/NINJA. Post-translationally, ubiquitinated. Targeted for degradation by the SCF(COI1) E3 ubiquitin ligase-proteasome pathway during jasmonate signaling.

The protein localises to the nucleus. Functionally, repressor of jasmonate responses. The polypeptide is Protein TIFY 8 (Arabidopsis thaliana (Mouse-ear cress)).